We begin with the raw amino-acid sequence, 465 residues long: 23S rRNA (uracil(1939)-C(5))-methyltransferase RlmD (465 aa).

The disordered stretch occupies residues 1 to 24 (MSEAVPLSTRRASSAGDAPGRAPV). Residues 16-80 (GDAPGRAPVL…PTYEQAQVVD (65 aa)) enclose the TRAM domain. Cys-93, Cys-99, Cys-102, and Cys-181 together coordinate [4Fe-4S] cluster. Residues Gln-289, Phe-318, Asn-323, Glu-339, Asn-367, and Asp-388 each contribute to the S-adenosyl-L-methionine site. Cys-421 acts as the Nucleophile in catalysis.

It belongs to the class I-like SAM-binding methyltransferase superfamily. RNA M5U methyltransferase family. RlmD subfamily.

It catalyses the reaction uridine(1939) in 23S rRNA + S-adenosyl-L-methionine = 5-methyluridine(1939) in 23S rRNA + S-adenosyl-L-homocysteine + H(+). Its function is as follows. Catalyzes the formation of 5-methyl-uridine at position 1939 (m5U1939) in 23S rRNA. This chain is 23S rRNA (uracil(1939)-C(5))-methyltransferase RlmD, found in Burkholderia mallei (strain ATCC 23344).